The primary structure comprises 358 residues: Transmembrane protein 144 homolog B (358 aa).

10 helical membrane passes run V6–V26, L35–I55, I60–V79, I86–K108, P122–I142, I211–M231, L244–V264, I279–A299, I307–Y327, and L337–S357.

Belongs to the TMEM144 family.

It is found in the membrane. This Dictyostelium discoideum (Social amoeba) protein is Transmembrane protein 144 homolog B (tmem144B).